We begin with the raw amino-acid sequence, 527 residues long: DNA polymerase epsilon subunit 2 (527 aa).

The protein belongs to the DNA polymerase epsilon subunit B family. As to quaternary structure, component of the DNA polymerase epsilon complex consisting of four subunits: the catalytic subunit POLE and the accessory subunits POLE2, POLE3 and POLE4.

Its subcellular location is the nucleus. Accessory component of the DNA polymerase epsilon complex. Participates in DNA repair and in chromosomal DNA replication. In Mus musculus (Mouse), this protein is DNA polymerase epsilon subunit 2 (Pole2).